The chain runs to 247 residues: Uridylate kinase (247 aa).

14-17 (KLSG) lines the ATP pocket. The segment at 22–27 (GERGVG) is involved in allosteric activation by GTP. G56 contacts UMP. ATP contacts are provided by G57 and R61. Residues D76 and 137-144 (IGSPYFST) contribute to the UMP site. ATP contacts are provided by N165, Y171, and D174.

The protein belongs to the UMP kinase family. Homohexamer.

It localises to the cytoplasm. The enzyme catalyses UMP + ATP = UDP + ADP. It participates in pyrimidine metabolism; CTP biosynthesis via de novo pathway; UDP from UMP (UMPK route): step 1/1. Its activity is regulated as follows. Allosterically activated by GTP. Inhibited by UTP, 5-bromo-UTP and 5-iodo-UTP. In terms of biological role, catalyzes the reversible phosphorylation of UMP to UDP, with ATP as the most efficient phosphate donor. This chain is Uridylate kinase (pyrH), found in Streptococcus pneumoniae serotype 4 (strain ATCC BAA-334 / TIGR4).